A 199-amino-acid polypeptide reads, in one-letter code: uncharacterized protein (199 aa).

The next 6 helical transmembrane spans lie at 1-21 (MEQF…TFIF), 28-48 (IAVS…IALY), 51-71 (LNAA…YLGM), 83-103 (LVAA…WFII), 127-147 (QLVL…FVIQ), and 154-174 (AVGG…LFGI).

The protein resides in the cell membrane. This is an uncharacterized protein from Bacillus subtilis (strain 168).